A 267-amino-acid polypeptide reads, in one-letter code: Taurine import ATP-binding protein TauB (267 aa).

One can recognise an ABC transporter domain in the interval 6-238; that stretch reads FNEASLIYPA…DILAGAPASE (233 aa). 43–50 contributes to the ATP binding site; sequence GRSGSGKT.

Belongs to the ABC transporter superfamily. Taurine importer (TC 3.A.1.17.1) family. In terms of assembly, the complex is composed of two ATP-binding proteins (TauB), two transmembrane proteins (TauC) and a solute-binding protein (TauA).

It localises to the cell inner membrane. The catalysed reaction is taurine(out) + ATP + H2O = taurine(in) + ADP + phosphate + H(+). Its function is as follows. Part of the ABC transporter complex TauABC involved in taurine import. Responsible for energy coupling to the transport system. The sequence is that of Taurine import ATP-binding protein TauB from Sinorhizobium fredii (strain NBRC 101917 / NGR234).